The following is a 1372-amino-acid chain: DNA-directed RNA polymerase subunit beta (1372 aa).

This sequence belongs to the RNA polymerase beta chain family. As to quaternary structure, the RNAP catalytic core consists of 2 alpha, 1 beta, 1 beta' and 1 omega subunit. When a sigma factor is associated with the core the holoenzyme is formed, which can initiate transcription.

The catalysed reaction is RNA(n) + a ribonucleoside 5'-triphosphate = RNA(n+1) + diphosphate. Its function is as follows. DNA-dependent RNA polymerase catalyzes the transcription of DNA into RNA using the four ribonucleoside triphosphates as substrates. The sequence is that of DNA-directed RNA polymerase subunit beta from Bradyrhizobium diazoefficiens (strain JCM 10833 / BCRC 13528 / IAM 13628 / NBRC 14792 / USDA 110).